A 218-amino-acid chain; its full sequence is Ribose-5-phosphate isomerase A (218 aa).

Residues 28–31, 81–84, and 94–97 each bind substrate; these read TGST, DGAD, and KGGG. Residue Glu103 is the Proton acceptor of the active site. Lys121 serves as a coordination point for substrate.

This sequence belongs to the ribose 5-phosphate isomerase family. In terms of assembly, homodimer.

It carries out the reaction aldehydo-D-ribose 5-phosphate = D-ribulose 5-phosphate. It participates in carbohydrate degradation; pentose phosphate pathway; D-ribose 5-phosphate from D-ribulose 5-phosphate (non-oxidative stage): step 1/1. Its function is as follows. Catalyzes the reversible conversion of ribose-5-phosphate to ribulose 5-phosphate. In Shewanella sediminis (strain HAW-EB3), this protein is Ribose-5-phosphate isomerase A.